Reading from the N-terminus, the 879-residue chain is Paramyosin, long form (879 aa).

Residues 1–31 (MSSSQAVRSSKYSYRATSTGPGTADVNIEYI) are nonhelical region. Phosphoserine is present on serine 18. Residues 32–858 (QDLSSLSRLE…IIRAKHRTFV (827 aa)) adopt a coiled-coil conformation. Residues 859 to 879 (TTSTVPGSQVYIQETTRTITE) are nonhelical region.

The protein belongs to the paramyosin family. Heterodimer of two isoforms. The more-acidic and less-abundant isoform is phosphorylated. Expressed in all larval and adult muscle tissues. Expression is five times higher in tubular than in fibrillar muscles.

It localises to the cytoplasm. The protein localises to the myofibril. Its function is as follows. Paramyosin is a major structural component of many thick filaments isolated from invertebrate muscles. The sequence is that of Paramyosin, long form (Prm) from Drosophila melanogaster (Fruit fly).